Here is a 655-residue protein sequence, read N- to C-terminus: Macrolide export ATP-binding/permease protein MacB (655 aa).

The region spanning 6–244 is the ABC transporter domain; it reads IVLRGLRREY…VAAPTAAAAQ (239 aa). ATP is bound at residue 42–49; it reads GASGSGKS. The next 4 membrane-spanning stretches (helical) occupy residues 279-299, 528-548, 579-599, and 618-638; these read FLTMLGIIIGIASVVFIVAVG, LTLMIAAIAVISLVVGGIGVM, FLIEAVMVCLIGGGLGVAVAY, and AGSIIAAFICSTGIGVVFGYL.

It belongs to the ABC transporter superfamily. Macrolide exporter (TC 3.A.1.122) family. Homodimer.

It localises to the cell inner membrane. Its function is as follows. Non-canonical ABC transporter that contains transmembrane domains (TMD), which form a pore in the inner membrane, and an ATP-binding domain (NBD), which is responsible for energy generation. Confers resistance against macrolides. This Rhodopseudomonas palustris (strain BisB18) protein is Macrolide export ATP-binding/permease protein MacB.